Reading from the N-terminus, the 389-residue chain is Putative sugar efflux transporter DR_1322 (389 aa).

12 helical membrane passes run 10-30 (AVLL…LFAV), 34-54 (GMTP…AVLV), 69-89 (KPLV…LSGV), 96-116 (MATG…VFAF), 135-155 (VLRA…AAVL), 161-181 (SGVF…LLFI), 211-231 (GWVV…MVMF), 246-266 (VGFL…LFVL), 281-301 (LLLF…PLLI), 308-328 (AAVL…LMPG), 341-361 (SVVG…VFGY), and 363-383 (PVFL…LWAT).

It belongs to the major facilitator superfamily. Set transporter family.

The protein localises to the cell membrane. Its function is as follows. Involved in the efflux of sugars. The physiological role may be the detoxification of non-metabolizable sugar analogs. The protein is Putative sugar efflux transporter DR_1322 of Deinococcus radiodurans (strain ATCC 13939 / DSM 20539 / JCM 16871 / CCUG 27074 / LMG 4051 / NBRC 15346 / NCIMB 9279 / VKM B-1422 / R1).